The sequence spans 398 residues: 1-deoxy-D-xylulose 5-phosphate reductoisomerase (398 aa).

7 residues coordinate NADPH: Thr-10, Gly-11, Ser-12, Ile-13, Lys-37, Asn-38, and Asn-124. Residue Lys-125 coordinates 1-deoxy-D-xylulose 5-phosphate. Glu-126 provides a ligand contact to NADPH. Residue Asp-150 participates in Mn(2+) binding. Residues Ser-151, Glu-152, Ser-186, and His-209 each coordinate 1-deoxy-D-xylulose 5-phosphate. Glu-152 contributes to the Mn(2+) binding site. NADPH is bound at residue Gly-215. 1-deoxy-D-xylulose 5-phosphate-binding residues include Ser-222, Asn-227, Lys-228, and Glu-231. Glu-231 is a binding site for Mn(2+).

Belongs to the DXR family. Homodimer. Requires Mg(2+) as cofactor. Mn(2+) serves as cofactor.

The enzyme catalyses 2-C-methyl-D-erythritol 4-phosphate + NADP(+) = 1-deoxy-D-xylulose 5-phosphate + NADPH + H(+). It functions in the pathway isoprenoid biosynthesis; isopentenyl diphosphate biosynthesis via DXP pathway; isopentenyl diphosphate from 1-deoxy-D-xylulose 5-phosphate: step 1/6. Catalyzes the NADPH-dependent rearrangement and reduction of 1-deoxy-D-xylulose-5-phosphate (DXP) to 2-C-methyl-D-erythritol 4-phosphate (MEP). This is 1-deoxy-D-xylulose 5-phosphate reductoisomerase from Buchnera aphidicola subsp. Acyrthosiphon pisum (strain APS) (Acyrthosiphon pisum symbiotic bacterium).